A 206-amino-acid chain; its full sequence is Ribosomal RNA large subunit methyltransferase E (206 aa).

S-adenosyl-L-methionine-binding residues include G54, W56, D76, D94, and D118. K158 (proton acceptor) is an active-site residue.

Belongs to the class I-like SAM-binding methyltransferase superfamily. RNA methyltransferase RlmE family.

Its subcellular location is the cytoplasm. The enzyme catalyses uridine(2552) in 23S rRNA + S-adenosyl-L-methionine = 2'-O-methyluridine(2552) in 23S rRNA + S-adenosyl-L-homocysteine + H(+). Its function is as follows. Specifically methylates the uridine in position 2552 of 23S rRNA at the 2'-O position of the ribose in the fully assembled 50S ribosomal subunit. This Methanosphaera stadtmanae (strain ATCC 43021 / DSM 3091 / JCM 11832 / MCB-3) protein is Ribosomal RNA large subunit methyltransferase E.